The sequence spans 420 residues: MEPKPEELEKKKVVRRKFIGKRSSVKGDEASLVKSANKTRHVGRVMNQIPQEILNDKDLNEAIRLLPSNYNFEIHKTVWNIKKNGAKRVALQMPEGLLIYSLIISDILEQFCEVETVVMGDVSYGACCIDDYTARALDCDFIVHYAHSCLVPIDITDIKVLYVFVTINIDEQHLINTIKLNFDKGSQLAVFGTIQFNPTIHSIKSKLENDEEKTMYLIPPQTMPLSKGEVLGCTSARLNKEQIKAMIYIGDGRFHLESSMIHNPEIPAYRYDPYSRKFTKEYYDQKQMIEVREDAVKIASNAKKIGLILGALGRQGNPVTLNNLETKLSAKGIQVVKIILSEIFPQKLSMFNDIDAFIQVACPRLSIDWGYAFNKPLLTPYEAMVMLENDTKWNETYYPMDYYSKEGYGRGKVPDHSNVI.

Residues cysteine 127, cysteine 233, and cysteine 362 each coordinate [4Fe-4S] cluster.

Belongs to the DPH1/DPH2 family. DPH1 subfamily. As to quaternary structure, component of the 2-(3-amino-3-carboxypropyl)histidine synthase complex composed of DPH1, DPH2, DPH3 and a NADH-dependent reductase, predominantly CBR1. [4Fe-4S] cluster is required as a cofactor.

The protein resides in the cytoplasm. The catalysed reaction is L-histidyl-[translation elongation factor 2] + S-adenosyl-L-methionine = 2-[(3S)-amino-3-carboxypropyl]-L-histidyl-[translation elongation factor 2] + S-methyl-5'-thioadenosine + H(+). Its pathway is protein modification; peptidyl-diphthamide biosynthesis. In terms of biological role, catalyzes the first step of diphthamide biosynthesis, a post-translational modification of histidine which occurs in elongation factor 2. DPH1 and DPH2 transfer a 3-amino-3-carboxypropyl (ACP) group from S-adenosyl-L-methionine (SAM) to a histidine residue, the reaction is assisted by a reduction system comprising DPH3 and a NADH-dependent reductase, predominantly CBR1. This Debaryomyces hansenii (strain ATCC 36239 / CBS 767 / BCRC 21394 / JCM 1990 / NBRC 0083 / IGC 2968) (Yeast) protein is 2-(3-amino-3-carboxypropyl)histidine synthase subunit 1 (DPH1).